The primary structure comprises 262 residues: Acyl-[acyl-carrier-protein]--UDP-N-acetylglucosamine O-acyltransferase (262 aa).

Belongs to the transferase hexapeptide repeat family. LpxA subfamily. As to quaternary structure, homotrimer.

Its subcellular location is the cytoplasm. The catalysed reaction is a (3R)-hydroxyacyl-[ACP] + UDP-N-acetyl-alpha-D-glucosamine = a UDP-3-O-[(3R)-3-hydroxyacyl]-N-acetyl-alpha-D-glucosamine + holo-[ACP]. The protein operates within glycolipid biosynthesis; lipid IV(A) biosynthesis; lipid IV(A) from (3R)-3-hydroxytetradecanoyl-[acyl-carrier-protein] and UDP-N-acetyl-alpha-D-glucosamine: step 1/6. Functionally, involved in the biosynthesis of lipid A, a phosphorylated glycolipid that anchors the lipopolysaccharide to the outer membrane of the cell. This is Acyl-[acyl-carrier-protein]--UDP-N-acetylglucosamine O-acyltransferase from Vibrio atlanticus (strain LGP32) (Vibrio splendidus (strain Mel32)).